The chain runs to 744 residues: Eukaryotic translation initiation factor 3 subunit B (744 aa).

A disordered region spans residues 1-20 (MAPSFDHLPDPEEDEYDEEE). Residues 11–20 (PEEDEYDEEE) are compositionally biased toward acidic residues. Residues 40–126 (TFVVIDGLPE…HTLRVNKLTD (87 aa)) form the RRM domain. WD repeat units follow at residues 193-232 (DRQHWTESFVQWSPQGTFLTSMHQQGVQLWGGPSWTRQKR), 234-290 (AHPF…PLRS), 307-348 (PVKR…LLDK), and 577-622 (ADHY…LREE). The segment covering 699–714 (EREDAGLPRDPLEPLK) has biased composition (basic and acidic residues). Residues 699–722 (EREDAGLPRDPLEPLKSKMASGDE) form a disordered region.

This sequence belongs to the eIF-3 subunit B family. In terms of assembly, component of the eukaryotic translation initiation factor 3 (eIF-3) complex.

It localises to the cytoplasm. RNA-binding component of the eukaryotic translation initiation factor 3 (eIF-3) complex, which is involved in protein synthesis of a specialized repertoire of mRNAs and, together with other initiation factors, stimulates binding of mRNA and methionyl-tRNAi to the 40S ribosome. The eIF-3 complex specifically targets and initiates translation of a subset of mRNAs involved in cell proliferation. The polypeptide is Eukaryotic translation initiation factor 3 subunit B (prt1) (Sclerotinia sclerotiorum (strain ATCC 18683 / 1980 / Ss-1) (White mold)).